A 157-amino-acid polypeptide reads, in one-letter code: MRIGHGYDVHRFCDGDFITLGGVRIPHKYGLLAHSDGDVLLHALSDALLGAAGLGDIGKHFPDTDPQFKGADSRVLLRHVVGIVQAKGWKVGNVDATIVAQAPKMSPHIETMRQRIAEDLQVELDQVNVKATTTEKLGFTGREEGIAVHAVALLLPA.

A divalent metal cation-binding residues include aspartate 8 and histidine 10. 4-CDP-2-C-methyl-D-erythritol 2-phosphate is bound by residues 8–10 and 34–35; these read DVH and HS. A divalent metal cation is bound at residue histidine 42. Residues 56-58, 61-65, 132-135, phenylalanine 139, and arginine 142 each bind 4-CDP-2-C-methyl-D-erythritol 2-phosphate; these read DIG, FPDTD, and TTTE.

Belongs to the IspF family. In terms of assembly, homotrimer. Requires a divalent metal cation as cofactor.

It carries out the reaction 4-CDP-2-C-methyl-D-erythritol 2-phosphate = 2-C-methyl-D-erythritol 2,4-cyclic diphosphate + CMP. Its pathway is isoprenoid biosynthesis; isopentenyl diphosphate biosynthesis via DXP pathway; isopentenyl diphosphate from 1-deoxy-D-xylulose 5-phosphate: step 4/6. Functionally, involved in the biosynthesis of isopentenyl diphosphate (IPP) and dimethylallyl diphosphate (DMAPP), two major building blocks of isoprenoid compounds. Catalyzes the conversion of 4-diphosphocytidyl-2-C-methyl-D-erythritol 2-phosphate (CDP-ME2P) to 2-C-methyl-D-erythritol 2,4-cyclodiphosphate (ME-CPP) with a corresponding release of cytidine 5-monophosphate (CMP). This chain is 2-C-methyl-D-erythritol 2,4-cyclodiphosphate synthase, found in Pseudomonas putida (strain W619).